Reading from the N-terminus, the 347-residue chain is Probable dual-specificity RNA methyltransferase RlmN (347 aa).

Glu90 serves as the catalytic Proton acceptor. The 231-residue stretch at 96–326 (YKHGNSICIS…VTVRREMGSD (231 aa)) folds into the Radical SAM core domain. Cys103 and Cys331 form a disulfide bridge. Residues Cys110, Cys114, and Cys117 each coordinate [4Fe-4S] cluster. Residues 157–158 (GE), Ser189, 212–214 (SLH), and Asn288 each bind S-adenosyl-L-methionine. The active-site S-methylcysteine intermediate is Cys331.

Belongs to the radical SAM superfamily. RlmN family. The cofactor is [4Fe-4S] cluster.

The protein localises to the cytoplasm. The enzyme catalyses adenosine(2503) in 23S rRNA + 2 reduced [2Fe-2S]-[ferredoxin] + 2 S-adenosyl-L-methionine = 2-methyladenosine(2503) in 23S rRNA + 5'-deoxyadenosine + L-methionine + 2 oxidized [2Fe-2S]-[ferredoxin] + S-adenosyl-L-homocysteine. It catalyses the reaction adenosine(37) in tRNA + 2 reduced [2Fe-2S]-[ferredoxin] + 2 S-adenosyl-L-methionine = 2-methyladenosine(37) in tRNA + 5'-deoxyadenosine + L-methionine + 2 oxidized [2Fe-2S]-[ferredoxin] + S-adenosyl-L-homocysteine. Specifically methylates position 2 of adenine 2503 in 23S rRNA and position 2 of adenine 37 in tRNAs. This Clostridium botulinum (strain Eklund 17B / Type B) protein is Probable dual-specificity RNA methyltransferase RlmN.